The following is a 216-amino-acid chain: Putative holocytochrome-c1 synthase (216 aa).

Residues 1-46 (MQPEQLNQEEESKCPVPPEVRDAWLKSHGGKKPSEVHDTPHPTMLP) are disordered.

It belongs to the cytochrome c-type heme lyase family.

It is found in the mitochondrion inner membrane. The catalysed reaction is holo-[cytochrome c] = apo-[cytochrome c] + heme b. In terms of biological role, lyase that catalyzes the covalent linking of the heme group to the cytochrome C1 apoprotein to produce the mature functional cytochrome. The sequence is that of Putative holocytochrome-c1 synthase from Schizosaccharomyces pombe (strain 972 / ATCC 24843) (Fission yeast).